Here is a 544-residue protein sequence, read N- to C-terminus: CTP synthase (544 aa).

The amidoligase domain stretch occupies residues 1-265 (MTKFIFVTGG…DNIITEQLQL (265 aa)). Position 13 (Ser-13) interacts with CTP. A UTP-binding site is contributed by Ser-13. ATP-binding positions include 14–19 (SLGKGI) and Asp-71. Asp-71 and Glu-139 together coordinate Mg(2+). CTP contacts are provided by residues 146 to 148 (DIE), 186 to 191 (KTKPTQ), and Lys-222. UTP contacts are provided by residues 186-191 (KTKPTQ) and Lys-222. A Glutamine amidotransferase type-1 domain is found at 290-544 (KIAMVGKYVD…VKAALNNKKA (255 aa)). Gly-353 is an L-glutamine binding site. Residue Cys-380 is the Nucleophile; for glutamine hydrolysis of the active site. Residues 381 to 384 (LGMQ), Glu-404, and Arg-471 contribute to the L-glutamine site. Catalysis depends on residues His-517 and Glu-519.

It belongs to the CTP synthase family. Homotetramer.

The catalysed reaction is UTP + L-glutamine + ATP + H2O = CTP + L-glutamate + ADP + phosphate + 2 H(+). It carries out the reaction L-glutamine + H2O = L-glutamate + NH4(+). It catalyses the reaction UTP + NH4(+) + ATP = CTP + ADP + phosphate + 2 H(+). Its pathway is pyrimidine metabolism; CTP biosynthesis via de novo pathway; CTP from UDP: step 2/2. Allosterically activated by GTP, when glutamine is the substrate; GTP has no effect on the reaction when ammonia is the substrate. The allosteric effector GTP functions by stabilizing the protein conformation that binds the tetrahedral intermediate(s) formed during glutamine hydrolysis. Inhibited by the product CTP, via allosteric rather than competitive inhibition. Catalyzes the ATP-dependent amination of UTP to CTP with either L-glutamine or ammonia as the source of nitrogen. Regulates intracellular CTP levels through interactions with the four ribonucleotide triphosphates. The protein is CTP synthase of Neisseria meningitidis serogroup A / serotype 4A (strain DSM 15465 / Z2491).